We begin with the raw amino-acid sequence, 301 residues long: MTLERDAAAQVAKVLSEALPYIRRFVGKTLVIKYGGNAMESEELKQGFARDIVLMKAVGINPVVVHGGGPQIGDLLKRLSIESHFIDGMRVTDTATMDVVEMVLGGQVNKSIVNLINQHGGSAIGLTGKDAGLIRAKKLKVTRQTPEMTQPEIIDIGHVGEVTGVNTELLNMLVQGDFIPVIAPIGVGPDGESYNINADLVAGKVAEALKAEKLMLLTNIAGLLDKQGEVLTGLTTEQVDGLIADGTIYGGMLPKIRCALEAVQGGVHSAHIVDGRVPNAVLLEIFTDSGVGTLITNRKRH.

Substrate is bound by residues 68-69 (GG), Arg-90, and Asn-195.

It belongs to the acetylglutamate kinase family. ArgB subfamily.

It localises to the cytoplasm. It catalyses the reaction N-acetyl-L-glutamate + ATP = N-acetyl-L-glutamyl 5-phosphate + ADP. It functions in the pathway amino-acid biosynthesis; L-arginine biosynthesis; N(2)-acetyl-L-ornithine from L-glutamate: step 2/4. Functionally, catalyzes the ATP-dependent phosphorylation of N-acetyl-L-glutamate. This chain is Acetylglutamate kinase, found in Ectopseudomonas mendocina (strain ymp) (Pseudomonas mendocina).